Reading from the N-terminus, the 245-residue chain is 1-(5-phosphoribosyl)-5-[(5-phosphoribosylamino)methylideneamino] imidazole-4-carboxamide isomerase (245 aa).

Catalysis depends on D8, which acts as the Proton acceptor. D130 (proton donor) is an active-site residue.

It belongs to the HisA/HisF family.

It localises to the cytoplasm. The catalysed reaction is 1-(5-phospho-beta-D-ribosyl)-5-[(5-phospho-beta-D-ribosylamino)methylideneamino]imidazole-4-carboxamide = 5-[(5-phospho-1-deoxy-D-ribulos-1-ylimino)methylamino]-1-(5-phospho-beta-D-ribosyl)imidazole-4-carboxamide. Its pathway is amino-acid biosynthesis; L-histidine biosynthesis; L-histidine from 5-phospho-alpha-D-ribose 1-diphosphate: step 4/9. The chain is 1-(5-phosphoribosyl)-5-[(5-phosphoribosylamino)methylideneamino] imidazole-4-carboxamide isomerase from Pseudomonas entomophila (strain L48).